Consider the following 211-residue polypeptide: Imidazole glycerol phosphate synthase subunit HisH (211 aa).

The 211-residue stretch at 1–211 (MIGIIDYGMG…VGIATGRGNG (211 aa)) folds into the Glutamine amidotransferase type-1 domain. Cys-79 serves as the catalytic Nucleophile. Catalysis depends on residues His-186 and Glu-188.

As to quaternary structure, heterodimer of HisH and HisF.

It localises to the cytoplasm. The catalysed reaction is 5-[(5-phospho-1-deoxy-D-ribulos-1-ylimino)methylamino]-1-(5-phospho-beta-D-ribosyl)imidazole-4-carboxamide + L-glutamine = D-erythro-1-(imidazol-4-yl)glycerol 3-phosphate + 5-amino-1-(5-phospho-beta-D-ribosyl)imidazole-4-carboxamide + L-glutamate + H(+). The enzyme catalyses L-glutamine + H2O = L-glutamate + NH4(+). Its pathway is amino-acid biosynthesis; L-histidine biosynthesis; L-histidine from 5-phospho-alpha-D-ribose 1-diphosphate: step 5/9. Functionally, IGPS catalyzes the conversion of PRFAR and glutamine to IGP, AICAR and glutamate. The HisH subunit catalyzes the hydrolysis of glutamine to glutamate and ammonia as part of the synthesis of IGP and AICAR. The resulting ammonia molecule is channeled to the active site of HisF. The polypeptide is Imidazole glycerol phosphate synthase subunit HisH (Geobacillus kaustophilus (strain HTA426)).